We begin with the raw amino-acid sequence, 470 residues long: Pheromone a factor receptor (470 aa).

Residues M1–S5 are Extracellular-facing. Residues A6–A23 traverse the membrane as a helical segment. At W24–K29 the chain is on the cytoplasmic side. A helical membrane pass occupies residues N30 to I53. Over W54 to D70 the chain is Extracellular. A helical membrane pass occupies residues I71–L98. At K99–D116 the chain is on the cytoplasmic side. The chain crosses the membrane as a helical span at residues L117–L134. At Q135–W155 the chain is on the extracellular side. A helical transmembrane segment spans residues I156–F183. Residues Y184–R205 lie on the Cytoplasmic side of the membrane. The helical transmembrane segment at F206–F228 threads the bilayer. Topologically, residues V229–W266 are extracellular. Residues L267–A285 traverse the membrane as a helical segment. Residues L286–P470 are Cytoplasmic-facing. The tract at residues F300–P470 is hydrophilic. A disordered region spans residues N440 to P470.

Belongs to the G-protein coupled receptor 4 family.

The protein resides in the membrane. Its function is as follows. Receptor for the peptide pheromone a factor. This chain is Pheromone a factor receptor (STE3), found in Saccharomyces cerevisiae (strain ATCC 204508 / S288c) (Baker's yeast).